Here is a 116-residue protein sequence, read N- to C-terminus: NADH-ubiquinone oxidoreductase chain 3 (116 aa).

3 consecutive transmembrane segments (helical) span residues 3-23, 56-76, and 87-107; these read LISTVILIASALSLILILVSF, FFLIAILFLLFDLEIALLLPL, and LTFMWATSVLALLTLGLIYEW.

Belongs to the complex I subunit 3 family.

It localises to the mitochondrion membrane. The enzyme catalyses a ubiquinone + NADH + 5 H(+)(in) = a ubiquinol + NAD(+) + 4 H(+)(out). Its function is as follows. Core subunit of the mitochondrial membrane respiratory chain NADH dehydrogenase (Complex I) that is believed to belong to the minimal assembly required for catalysis. Complex I functions in the transfer of electrons from NADH to the respiratory chain. The immediate electron acceptor for the enzyme is believed to be ubiquinone. In Gadus morhua (Atlantic cod), this protein is NADH-ubiquinone oxidoreductase chain 3 (MT-ND3).